The chain runs to 966 residues: MQGNLLKVLGVLAIVATLVCFIFAALGMIGAVKVGDSCYMRYASDGQGGADSIIGTITLNANANYVNTAKMLSDGTTLLVPDPTRYGEWLNTQVLVENSQPVNLQVVGQVSLCLAYIPKDNLQRTGAGSNLDDNGQMIPIPRINDANNPPVSLIMDAKNNEWRNIAELYANDRVLVSVSPNFANTDATVKDAFKGAEVTQDCSENKTTYNPICGKYSVYSGEYVNACELKEKYWNCEVTWRCPTWHEQIGCDWGALGCVASCKKIPECTTKCMAWVNITRPAPENYLDDGSFTFSWSDNTGKLFIDYSALQCSYNANIPPVDKCPDRVRDRRIKDKDYIGGVHCTSGICSDGDFQKNRRFWYTADGKGGKGPTGLIYQMNDAGSVSQALPSKLEFAKFVADTDQPPDYKGKDGKYLYKVIYNIPFNSNIAKSYLQYRLWSPTSQDSSKNTGGYVLNIKQTKCYRENGNSFNDTFDDRGRVQYIIVKPSENPNTSGKTYSPQGISVDSEGKYSFNANEAGYIWMKILNDPGNNLRDYKDSEGSYKVHFSTSLKVGSFTIKVMNPLLQLFKTKVQGAATSIFKNMVCYKANDSSSCTNFFTYIKAILILYVMTYGAMFLLGFAKINQKELVIRIAKIGVVSGLMNGNTFEFFNNYLFDAITNFSDSIIANMSGYSLFTSTNTISNPFMFLDAVMSKIFFSQTFIAQLLALLSLGLSGIIYFIITFIAVCIVIITALRAVAVYIMAFMATCILIGIAPLFISFLLFDFTRYLFDNWVRFTIRYMMEPVVMMAGIIVLTQLFTIYLDFVLGYSVCWKCALPIKIPFIGTILPIALLNVPIFCINWFAPWGMDYMSGMMGVNMQNIVALVIIAYGMYGYVEFSGRIVVKLTSAVGPSATEIGGKMSHDAGQKVLSSIGMDDKTRQGITGRAEARLKQRNKTLDQAEKNRKNTQKEGGEKTNEEPPKPETPK.

The N-terminal stretch at 1–24 (MQGNLLKVLGVLAIVATLVCFIFA) is a signal peptide. Helical transmembrane passes span 601–621 (IKAI…LGFA), 711–731 (LGLS…IVII), 743–763 (AFMA…FLLF), 785–805 (VVMM…LDFV), 822–842 (FIGT…INWF), and 855–875 (GVNM…YGYV). The disordered stretch occupies residues 918-966 (TRQGITGRAEARLKQRNKTLDQAEKNRKNTQKEGGEKTNEEPPKPETPK). Positions 926–966 (AEARLKQRNKTLDQAEKNRKNTQKEGGEKTNEEPPKPETPK) are enriched in basic and acidic residues.

The protein belongs to the TrbL/VirB6 family.

It is found in the cell membrane. This is an uncharacterized protein from Rickettsia conorii (strain ATCC VR-613 / Malish 7).